Here is a 343-residue protein sequence, read N- to C-terminus: MSKGLLLLWLVTELWWLYLTPAASEDTIIGFLGQPVTLPCHYLSWSQSRNSMCWGKGSCPNSKCNAELLRTDGTRIISRKSTKYTLLGKVQFGEVSLTISNTNRGDSGVYCCRIEVPGWFNDVKKNVRLELRRATTTKKPTTTTRPTTTPYVTTTTPELLPTTVMTTSVLPTTTPPQTLATTAFSTAVTTCPSTTPGSFSQETTKGSAFTTESETLPASNHSQRSMMTISTDIAVLRPTGSNPGILPSTSQLTTQKTTLTTSESLQKTTKSHQINSRQTILIIACCVGFVLMVLLFLAFLLRGKVTGANCLQRHKRPDNTEDSDSVLNDMSHGRDDEDGIFTL.

Residues 1 to 22 form the signal peptide; the sequence is MSKGLLLLWLVTELWWLYLTPA. Positions 23–128 constitute an Ig-like V-type domain; that stretch reads ASEDTIIGFL…WFNDVKKNVR (106 aa). The Extracellular portion of the chain corresponds to 23 to 279; sequence ASEDTIIGFL…KSHQINSRQT (257 aa). 3 disulfide bridges follow: cysteine 40–cysteine 112, cysteine 53–cysteine 64, and cysteine 59–cysteine 111. Residue asparagine 220 is glycosylated (N-linked (GlcNAc...) asparagine). The interval 239 to 258 is disordered; it reads TGSNPGILPSTSQLTTQKTT. Residues 248–258 are compositionally biased toward low complexity; sequence STSQLTTQKTT. Residues 280 to 300 form a helical membrane-spanning segment; it reads ILIIACCVGFVLMVLLFLAFL. At 301 to 343 the chain is on the cytoplasmic side; that stretch reads LRGKVTGANCLQRHKRPDNTEDSDSVLNDMSHGRDDEDGIFTL. Residues 313-343 form a disordered region; that stretch reads RHKRPDNTEDSDSVLNDMSHGRDDEDGIFTL. Phosphoserine occurs at positions 323, 325, and 331.

The protein belongs to the immunoglobulin superfamily. TIM family. Homodimer. In terms of tissue distribution, predominantly expressed in lymphoid tissues, such as spleen, lymph nodes, and Peyer patches. Also expressed in fetal liver, salivary gland, and spleen stromal cells, predominantly in the marginal zone and to a lesser extent throughout the white pulp. Not expressed in bone marrow-derived cells. Expressed mainly by antigen presenting cells (APCs) in T- and B-cell areas, but not by T- or B-lymphocytes.

The protein resides in the membrane. In terms of biological role, phosphatidylserine receptor that plays different role in immune response including phagocytosis of apoptotic cells and T-cell regulation. Controls T-cell activation in a bimodal fashion, decreasing the activation of naive T-cells by inducing cell cycle arrest, while increasing proliferation of activated T-cells by activating AKT1 and ERK1/2 phosphorylations and subsequent signaling pathways. Also plays a role in efferocytosis which is the process by which apoptotic cells are removed by phagocytic cells. Mechanistically, promotes the engulfment of apoptotic cells or exogenous particles by securing them to phagocytes through direct binding to phosphatidylserine present on apoptotic cells, while other engulfment receptors such as MERTK efficiently recognize apoptotic cells and mediate their ingestion. Additionally, promotes autophagy process by suppressing NLRP3 inflammasome activity via activation of STK11/PRKAA1 pathway in a phosphatidylserine-dependent mechanism. This chain is T-cell immunoglobulin and mucin domain-containing protein 4 (Timd4), found in Mus musculus (Mouse).